Consider the following 78-residue polypeptide: NAD(P)H-quinone oxidoreductase subunit L (78 aa).

A run of 2 helical transmembrane segments spans residues 10-30 (IILI…PAIV) and 47-67 (VFMY…SPFL).

Belongs to the complex I NdhL subunit family. NDH-1 can be composed of about 15 different subunits; different subcomplexes with different compositions have been identified which probably have different functions.

Its subcellular location is the cellular thylakoid membrane. The enzyme catalyses a plastoquinone + NADH + (n+1) H(+)(in) = a plastoquinol + NAD(+) + n H(+)(out). The catalysed reaction is a plastoquinone + NADPH + (n+1) H(+)(in) = a plastoquinol + NADP(+) + n H(+)(out). In terms of biological role, NDH-1 shuttles electrons from an unknown electron donor, via FMN and iron-sulfur (Fe-S) centers, to quinones in the respiratory and/or the photosynthetic chain. The immediate electron acceptor for the enzyme in this species is believed to be plastoquinone. Couples the redox reaction to proton translocation, and thus conserves the redox energy in a proton gradient. Cyanobacterial NDH-1 also plays a role in inorganic carbon-concentration. The chain is NAD(P)H-quinone oxidoreductase subunit L from Trichodesmium erythraeum (strain IMS101).